A 262-amino-acid chain; its full sequence is Apolipoprotein A-I (262 aa).

The first 18 residues, 1 to 18, serve as a signal peptide directing secretion; the sequence is MKFLALALTILLAAATQA. The interval 32 to 63 is 3 X approximate tandem repeats; that stretch reads VKVAMMEYMAQVKETGQRSIDLLDDTEFKEYK. 2 repeat units span residues 64–85 and 87–107. Residues 64–262 are 10 X approximate tandem repeats; sequence VQLSQSLDNL…YETISQAMKA (199 aa). The stretch at 108 to 118 is one 3; half-length repeat; that stretch reads KDVEDVRTQLE. A run of 5 repeats spans residues 119-140, 141-162, 163-184, 185-206, and 207-228. The stretch at 229–239 is one 9; half-length repeat; that stretch reads PLTNDFKGQVG. Repeat 10 spans residues 240–262; sequence PAAEQAKEKLMDFYETISQAMKA.

This sequence belongs to the apolipoprotein A1/A4/E family.

The protein localises to the secreted. Functionally, participates in the reverse transport of cholesterol from tissues to the liver for excretion by promoting cholesterol efflux from tissues and by acting as a cofactor for the lecithin cholesterol acyltransferase (LCAT). The polypeptide is Apolipoprotein A-I (apoa1) (Salmo trutta (Brown trout)).